The primary structure comprises 472 residues: 6-phosphogluconate dehydrogenase, decarboxylating (472 aa).

NADP(+) contacts are provided by residues 10–15 (GMAVMG), 33–35 (NRT), 74–76 (VQA), and Asn-102. Residues Asn-102 and 128-130 (SGG) each bind substrate. The Proton acceptor role is filled by Lys-184. Residue 187–188 (HN) participates in substrate binding. Glu-191 (proton donor) is an active-site residue. Positions 192, 262, 289, 447, and 453 each coordinate substrate.

Belongs to the 6-phosphogluconate dehydrogenase family. In terms of assembly, homodimer.

It catalyses the reaction 6-phospho-D-gluconate + NADP(+) = D-ribulose 5-phosphate + CO2 + NADPH. It participates in carbohydrate degradation; pentose phosphate pathway; D-ribulose 5-phosphate from D-glucose 6-phosphate (oxidative stage): step 3/3. Its function is as follows. Catalyzes the oxidative decarboxylation of 6-phosphogluconate to ribulose 5-phosphate and CO(2), with concomitant reduction of NADP to NADPH. This chain is 6-phosphogluconate dehydrogenase, decarboxylating (gnd), found in Lactococcus lactis subsp. lactis (strain IL1403) (Streptococcus lactis).